Here is a 233-residue protein sequence, read N- to C-terminus: Large ribosomal subunit protein uL1 (233 aa).

Belongs to the universal ribosomal protein uL1 family. In terms of assembly, part of the 50S ribosomal subunit.

Its function is as follows. Binds directly to 23S rRNA. The L1 stalk is quite mobile in the ribosome, and is involved in E site tRNA release. Functionally, protein L1 is also a translational repressor protein, it controls the translation of the L11 operon by binding to its mRNA. The protein is Large ribosomal subunit protein uL1 of Psychrobacter arcticus (strain DSM 17307 / VKM B-2377 / 273-4).